The sequence spans 382 residues: Dual-specificity RNA methyltransferase RlmN (382 aa).

E113 functions as the Proton acceptor in the catalytic mechanism. Positions 119–358 (EINRATLCIS…TTIRKQRGID (240 aa)) constitute a Radical SAM core domain. The cysteines at positions 126 and 363 are disulfide-linked. Positions 133, 137, and 140 each coordinate [4Fe-4S] cluster. Residues 187–188 (GE), S219, 241–243 (SLH), and N320 contribute to the S-adenosyl-L-methionine site. C363 acts as the S-methylcysteine intermediate in catalysis.

The protein belongs to the radical SAM superfamily. RlmN family. The cofactor is [4Fe-4S] cluster.

It localises to the cytoplasm. It carries out the reaction adenosine(2503) in 23S rRNA + 2 reduced [2Fe-2S]-[ferredoxin] + 2 S-adenosyl-L-methionine = 2-methyladenosine(2503) in 23S rRNA + 5'-deoxyadenosine + L-methionine + 2 oxidized [2Fe-2S]-[ferredoxin] + S-adenosyl-L-homocysteine. It catalyses the reaction adenosine(37) in tRNA + 2 reduced [2Fe-2S]-[ferredoxin] + 2 S-adenosyl-L-methionine = 2-methyladenosine(37) in tRNA + 5'-deoxyadenosine + L-methionine + 2 oxidized [2Fe-2S]-[ferredoxin] + S-adenosyl-L-homocysteine. Its function is as follows. Specifically methylates position 2 of adenine 2503 in 23S rRNA and position 2 of adenine 37 in tRNAs. m2A2503 modification seems to play a crucial role in the proofreading step occurring at the peptidyl transferase center and thus would serve to optimize ribosomal fidelity. The chain is Dual-specificity RNA methyltransferase RlmN from Wigglesworthia glossinidia brevipalpis.